The primary structure comprises 288 residues: MNNIIDGKALANEILADLKLEIQELISQTNASPKLAIVLVGDNPASIIYVRNKIKNAHKIGIYTLLVNLSTTIHTNDLISKINELNLDNKISGIIVQLPLPSSIDKNKILSAVSPSKDIDGFHPLNVGYLHSGISQNFIPCTALGCLAVIKKYEPNLTGKNVVIIGRSNIVGKPLSALLLKENCSVTICHSKTHNLSSITSKTDIVVAAIGSPLKLTAEYFNPESIVIDVGINRISGNKIIGDVDFENVQSKVKYITPVPGGIGPMTIAFLLKNTVKAFKDSLYTLDK.

Residues 166–168 (GRS), serine 191, and isoleucine 232 contribute to the NADP(+) site.

The protein belongs to the tetrahydrofolate dehydrogenase/cyclohydrolase family. As to quaternary structure, homodimer.

The enzyme catalyses (6R)-5,10-methylene-5,6,7,8-tetrahydrofolate + NADP(+) = (6R)-5,10-methenyltetrahydrofolate + NADPH. It carries out the reaction (6R)-5,10-methenyltetrahydrofolate + H2O = (6R)-10-formyltetrahydrofolate + H(+). Its pathway is one-carbon metabolism; tetrahydrofolate interconversion. Functionally, catalyzes the oxidation of 5,10-methylenetetrahydrofolate to 5,10-methenyltetrahydrofolate and then the hydrolysis of 5,10-methenyltetrahydrofolate to 10-formyltetrahydrofolate. The polypeptide is Bifunctional protein FolD (Rickettsia massiliae (strain Mtu5)).